The following is a 528-amino-acid chain: Probable histone-arginine methyltransferase 1.4 (528 aa).

Met-1 is subject to N-acetylmethionine. The SAM-dependent MTase PRMT-type domain occupies 144 to 459; sequence EAASAKMYFH…QSYTINLTLS (316 aa). S-adenosyl-L-methionine is bound by residues Gln-161, Arg-170, Gly-194, Glu-216, and Glu-246. Active-site residues include Glu-260 and Glu-269. Thr-274 serves as a coordination point for S-adenosyl-L-methionine.

This sequence belongs to the class I-like SAM-binding methyltransferase superfamily. Protein arginine N-methyltransferase family.

The protein localises to the nucleus. It is found in the cytoplasm. The enzyme catalyses L-arginyl-[protein] + 2 S-adenosyl-L-methionine = N(omega),N(omega)-dimethyl-L-arginyl-[protein] + 2 S-adenosyl-L-homocysteine + 2 H(+). Its function is as follows. Methylates (mono- and asymmetric dimethylation) the guanidino nitrogens of arginyl residues in several proteins involved in DNA packaging, transcription regulation, and mRNA stability. Recruited to promoters upon gene activation, methylates histone H3 and activates transcription via chromatin remodeling. This Arabidopsis thaliana (Mouse-ear cress) protein is Probable histone-arginine methyltransferase 1.4 (PRMT14).